Consider the following 290-residue polypeptide: Aquaporin-3 (290 aa).

The Cytoplasmic segment spans residues 1–24; it reads MGRQKELVTRCGEMLHIRYRLLRQ. A helical transmembrane segment spans residues 25–42; it reads ALAECLGTLILVMFGCGS. The Extracellular portion of the chain corresponds to 43 to 56; that stretch reads VAQVVLSRGTHGGF. The chain crosses the membrane as a helical span at residues 57-74; it reads LTINLAFGFAVTLGILVA. Topologically, residues 75–78 are cytoplasmic; sequence GQVS. The discontinuously helical intramembrane region spans 79–92; that stretch reads GAHLNPAVTFAMCF. Residues 83-85 carry the NPA 1 motif; the sequence is NPA. Residues 93–100 are Cytoplasmic-facing; that stretch reads LAREPWIK. Residues 101-121 traverse the membrane as a helical segment; that stretch reads LPVYTLAQTLGAFLGAGIIFG. Topologically, residues 122–159 are extracellular; it reads LYYDAIWAFANNQLIVSGPNGTAGIFATYPSGHLDMVN. A glycan (N-linked (GlcNAc...) asparagine) is linked at asparagine 141. A helical transmembrane segment spans residues 160-177; it reads GFFDQFIGTASLIVCVLA. Topologically, residues 178–189 are cytoplasmic; the sequence is IVDPNNNPVPRG. A helical transmembrane segment spans residues 190–206; sequence LEAFTVGLVVLVIGTSM. Over 207–210 the chain is Extracellular; sequence GFNS. Positions 211-224 form an intramembrane region, discontinuously helical; the sequence is GYAVNPARDFGPRL. The NPA 2 signature appears at 215–217; it reads NPA. At 225–242 the chain is on the extracellular side; the sequence is FTAIAGWGSEVFTTGRHW. Residues 243-264 form a helical membrane-spanning segment; that stretch reads WWVPIASPLLGSIAGVFVYQLM. Residues 265 to 290 lie on the Cytoplasmic side of the membrane; it reads IGCHLEPPPPSTDEENVKLSQVKHKE.

This sequence belongs to the MIP/aquaporin (TC 1.A.8) family. As to quaternary structure, homotetramer; each monomer provides an independent glycerol/water pore. Could also exist in other oligomeric states. Highly expressed in stomach and spleen, with lower expression in kidney and lung.

It is found in the cell membrane. It localises to the basolateral cell membrane. It carries out the reaction glycerol(in) = glycerol(out). It catalyses the reaction H2O(in) = H2O(out). The enzyme catalyses urea(in) = urea(out). The catalysed reaction is H2O2(out) = H2O2(in). Its function is as follows. Aquaglyceroporins form homotetrameric transmembrane channels, with each monomer independently mediating glycerol and water transport across the plasma membrane along their osmotic gradient. Could also be permeable to urea. Also participates in cell permeability to H2O2 and H2O2-mediated signaling. In skin, transports glycerol to the epidermis and stratum corneum, where it maintains hydration, elasticity, and supports lipid biosynthesis for barrier repair. In kidney, contributes to the reabsorption of water, helping the body maintain proper fluid balance. This Sus scrofa (Pig) protein is Aquaporin-3.